We begin with the raw amino-acid sequence, 170 residues long: Probable phospholipid hydroperoxide glutathione peroxidase (170 aa).

Residue cysteine 44 is part of the active site.

This sequence belongs to the glutathione peroxidase family.

Its subcellular location is the cytoplasm. The catalysed reaction is a hydroperoxy polyunsaturated fatty acid + 2 glutathione = a hydroxy polyunsaturated fatty acid + glutathione disulfide + H2O. Its function is as follows. Protects cells and enzymes from oxidative damage, by catalyzing the reduction of hydrogen peroxide, lipid peroxides and organic hydroperoxide, by glutathione. In Mesembryanthemum crystallinum (Common ice plant), this protein is Probable phospholipid hydroperoxide glutathione peroxidase (GPXMC1).